The chain runs to 1755 residues: Transposon Ty1-MR1 Gag-Pol polyprotein (1755 aa).

Composition is skewed to polar residues over residues 1–31 (MESQ…TTQD), 46–60 (VSTQ…TPLS), and 137–168 (VGTH…TNQH). Disordered regions lie at residues 1–88 (MESQ…YPQQ), 137–174 (VGTH…PPPI), and 350–420 (QQES…IRGS). The tract at residues 299 to 401 (NNGIPINNKV…NSQSRTARAH (103 aa)) is RNA-binding. Positions 363–372 (SPSDEKKDSR) are enriched in basic and acidic residues. Residues 373-411 (TYTNTTKPKSITRNSQKPNNSQSRTARAHNVSTFNNSPG) are compositionally biased toward polar residues. The active-site For protease activity; shared with dimeric partner is aspartate 461. An integrase-type zinc finger-like region spans residues 583–640 (NVHTSESTRKYPYPFIHRMLAHANAQTIRYSLKNNTITYFNESDVDWSSAIDYQCPDC). In terms of domain architecture, Integrase catalytic spans 660–835 (NSYEPFQYLH…AGLDISTLLP (176 aa)). Residues aspartate 671 and aspartate 736 each coordinate Mg(2+). A disordered region spans residues 958-1172 (AVSPTDSTPP…LGGIGDSNAY (215 aa)). Residues 960-969 (SPTDSTPPST) are compositionally biased toward low complexity. Over residues 1005-1015 (STPQISDIEST) the composition is skewed to polar residues. The span at 1038-1053 (ESSHASKSKDFRHSDS) shows a compositional bias: basic and acidic residues. 2 stretches are compositionally biased toward polar residues: residues 1054-1082 (YSDN…QTSE) and 1095-1106 (SIDTSSSESNSL). The Bipartite nuclear localization signal signature appears at 1178-1212 (KKRSLEDNETEIKVSRDTWNTKNMRSLEPPRSKKR). One can recognise a Reverse transcriptase Ty1/copia-type domain in the interval 1338–1476 (NNYYITQLDI…DILGLEIKYQ (139 aa)). Positions 1346, 1427, 1428, 1610, 1652, and 1685 each coordinate Mg(2+). Residues 1610-1752 (DASYGNQPYY…IKTFKLLTNK (143 aa)) enclose the RNase H Ty1/copia-type domain.

In terms of assembly, the capsid protein forms a homotrimer, from which the VLPs are assembled. The protease is a homodimer, whose active site consists of two apposed aspartic acid residues. Post-translationally, initially, virus-like particles (VLPs) are composed of the structural unprocessed proteins Gag and Gag-Pol, and also contain the host initiator methionine tRNA (tRNA(i)-Met) which serves as a primer for minus-strand DNA synthesis, and a dimer of genomic Ty RNA. Processing of the polyproteins occurs within the particle and proceeds by an ordered pathway, called maturation. First, the protease (PR) is released by autocatalytic cleavage of the Gag-Pol polyprotein yielding capsid protein p45 and a Pol-p154 precursor protein. This cleavage is a prerequisite for subsequent processing of Pol-p154 at the remaining sites to release the mature structural and catalytic proteins. Maturation takes place prior to the RT reaction and is required to produce transposition-competent VLPs.

Its subcellular location is the cytoplasm. The protein localises to the nucleus. It catalyses the reaction DNA(n) + a 2'-deoxyribonucleoside 5'-triphosphate = DNA(n+1) + diphosphate. The enzyme catalyses Endonucleolytic cleavage to 5'-phosphomonoester.. Functionally, capsid protein (CA) is the structural component of the virus-like particle (VLP), forming the shell that encapsulates the retrotransposons dimeric RNA genome. The particles are assembled from trimer-clustered units and there are holes in the capsid shells that allow for the diffusion of macromolecules. CA also has nucleocapsid-like chaperone activity, promoting primer tRNA(i)-Met annealing to the multipartite primer-binding site (PBS), dimerization of Ty1 RNA and initiation of reverse transcription. The aspartyl protease (PR) mediates the proteolytic cleavages of the Gag and Gag-Pol polyproteins after assembly of the VLP. Its function is as follows. Reverse transcriptase/ribonuclease H (RT) is a multifunctional enzyme that catalyzes the conversion of the retro-elements RNA genome into dsDNA within the VLP. The enzyme displays a DNA polymerase activity that can copy either DNA or RNA templates, and a ribonuclease H (RNase H) activity that cleaves the RNA strand of RNA-DNA heteroduplexes during plus-strand synthesis and hydrolyzes RNA primers. The conversion leads to a linear dsDNA copy of the retrotransposon that includes long terminal repeats (LTRs) at both ends. In terms of biological role, integrase (IN) targets the VLP to the nucleus, where a subparticle preintegration complex (PIC) containing at least integrase and the newly synthesized dsDNA copy of the retrotransposon must transit the nuclear membrane. Once in the nucleus, integrase performs the integration of the dsDNA into the host genome. This is Transposon Ty1-MR1 Gag-Pol polyprotein (TY1B-MR1) from Saccharomyces cerevisiae (strain ATCC 204508 / S288c) (Baker's yeast).